Consider the following 122-residue polypeptide: MIQMQTNLDVADNSGARRVMCIKVLGGSKRKYASIGDVIVVSIKEAIPRGRVKKGDVMKAVVVRTAKDIRRPDGSVIRFDTNAAVLIDNKKEPIGTRIFGPVPRELRAKNHMKIISLAPEVL.

Belongs to the universal ribosomal protein uL14 family. As to quaternary structure, part of the 50S ribosomal subunit. Forms a cluster with proteins L3 and L19. In the 70S ribosome, L14 and L19 interact and together make contacts with the 16S rRNA in bridges B5 and B8.

In terms of biological role, binds to 23S rRNA. Forms part of two intersubunit bridges in the 70S ribosome. This Rhizobium etli (strain CIAT 652) protein is Large ribosomal subunit protein uL14.